Consider the following 350-residue polypeptide: Ion-translocating oxidoreductase complex subunit D (350 aa).

A run of 3 helical transmembrane segments spans residues 20–39 (IMML…WYFF), 89–109 (IPPL…VIIA), and 123–143 (PAMI…TNWL). Threonine 187 carries the post-translational modification FMN phosphoryl threonine. 5 consecutive transmembrane segments (helical) span residues 215–235 (LAGL…LFLL), 244–264 (IPVS…LIAP), 267–287 (FLSP…FFIL), 301–321 (LVFG…GGYP), and 322–342 (DGVA…DYYT).

This sequence belongs to the NqrB/RnfD family. As to quaternary structure, the complex is composed of six subunits: RnfA, RnfB, RnfC, RnfD, RnfE and RnfG. Requires FMN as cofactor.

It localises to the cell inner membrane. Functionally, part of a membrane-bound complex that couples electron transfer with translocation of ions across the membrane. The protein is Ion-translocating oxidoreductase complex subunit D of Cronobacter sakazakii (strain ATCC BAA-894) (Enterobacter sakazakii).